The sequence spans 115 residues: Glutaredoxin-like protein C5orf63 homolog (115 aa).

An intrachain disulfide couples Cys40 to Cys43.

It belongs to the glutaredoxin family. YDR286C subfamily.

In Mus musculus (Mouse), this protein is Glutaredoxin-like protein C5orf63 homolog.